A 295-amino-acid polypeptide reads, in one-letter code: Ethanolamine ammonia-lyase small subunit (295 aa).

The adenosylcob(III)alamin site is built by V208 and E229.

Belongs to the EutC family. The basic unit is a heterodimer which dimerizes to form tetramers. The heterotetramers trimerize; 6 large subunits form a core ring with 6 small subunits projecting outwards. Adenosylcob(III)alamin serves as cofactor.

It is found in the bacterial microcompartment. It catalyses the reaction ethanolamine = acetaldehyde + NH4(+). It participates in amine and polyamine degradation; ethanolamine degradation. In terms of biological role, catalyzes the deamination of various vicinal amino-alcohols to oxo compounds. Allows this organism to utilize ethanolamine as the sole source of nitrogen and carbon in the presence of external vitamin B12. This chain is Ethanolamine ammonia-lyase small subunit, found in Fusobacterium nucleatum subsp. nucleatum (strain ATCC 25586 / DSM 15643 / BCRC 10681 / CIP 101130 / JCM 8532 / KCTC 2640 / LMG 13131 / VPI 4355).